Here is a 281-residue protein sequence, read N- to C-terminus: Diaminopimelate epimerase (281 aa).

The substrate site is built by N14 and N65. The active-site Proton donor is C74. Residues 75–76 (GN), N165, N198, and 216–217 (ER) contribute to the substrate site. Catalysis depends on C225, which acts as the Proton acceptor. Residue 226 to 227 (GT) coordinates substrate.

It belongs to the diaminopimelate epimerase family. In terms of assembly, homodimer.

It localises to the cytoplasm. It carries out the reaction (2S,6S)-2,6-diaminopimelate = meso-2,6-diaminopimelate. The protein operates within amino-acid biosynthesis; L-lysine biosynthesis via DAP pathway; DL-2,6-diaminopimelate from LL-2,6-diaminopimelate: step 1/1. In terms of biological role, catalyzes the stereoinversion of LL-2,6-diaminopimelate (L,L-DAP) to meso-diaminopimelate (meso-DAP), a precursor of L-lysine and an essential component of the bacterial peptidoglycan. In Leptospira interrogans serogroup Icterohaemorrhagiae serovar copenhageni (strain Fiocruz L1-130), this protein is Diaminopimelate epimerase.